A 174-amino-acid chain; its full sequence is Large ribosomal subunit protein uL10 (174 aa).

This sequence belongs to the universal ribosomal protein uL10 family. As to quaternary structure, part of the ribosomal stalk of the 50S ribosomal subunit. The N-terminus interacts with L11 and the large rRNA to form the base of the stalk. The C-terminus forms an elongated spine to which L12 dimers bind in a sequential fashion forming a multimeric L10(L12)X complex.

Forms part of the ribosomal stalk, playing a central role in the interaction of the ribosome with GTP-bound translation factors. This Trichlorobacter lovleyi (strain ATCC BAA-1151 / DSM 17278 / SZ) (Geobacter lovleyi) protein is Large ribosomal subunit protein uL10.